Consider the following 217-residue polypeptide: Ribosomal RNA small subunit methyltransferase G (217 aa).

Residues glycine 85, leucine 90, 135–136 (IE), and arginine 149 each bind S-adenosyl-L-methionine.

The protein belongs to the methyltransferase superfamily. RNA methyltransferase RsmG family.

The protein localises to the cytoplasm. It carries out the reaction guanosine(527) in 16S rRNA + S-adenosyl-L-methionine = N(7)-methylguanosine(527) in 16S rRNA + S-adenosyl-L-homocysteine. Specifically methylates the N7 position of guanine in position 527 of 16S rRNA. This Acidiphilium cryptum (strain JF-5) protein is Ribosomal RNA small subunit methyltransferase G.